We begin with the raw amino-acid sequence, 194 residues long: Erythropoietin (194 aa).

Positions 1 to 27 (MGARDCTPLLLLLLSFLLFPLGLPVLG) are cleaved as a signal peptide. Disulfide bonds link Cys34–Cys189 and Cys56–Cys60. Asn51 carries an N-linked (GlcNAc...) asparagine glycan. N-linked (GlcNAc...) asparagine glycosylation is found at Asn65 and Asn110.

The protein belongs to the EPO/TPO family. Produced by kidney or liver of adult mammals and by liver of fetal or neonatal mammals.

It localises to the secreted. In terms of biological role, hormone involved in the regulation of erythrocyte proliferation and differentiation and the maintenance of a physiological level of circulating erythrocyte mass. Binds to EPOR leading to EPOR dimerization and JAK2 activation thereby activating specific downstream effectors, including STAT1 and STAT3. In Ovis aries (Sheep), this protein is Erythropoietin (EPO).